The sequence spans 307 residues: Serine/threonine-protein phosphatase PP2A-1 catalytic subunit (307 aa).

Aspartate 54, histidine 56, aspartate 82, and asparagine 114 together coordinate Mn(2+). The Proton donor role is filled by histidine 115. Mn(2+) contacts are provided by histidine 164 and histidine 238. The tract at residues 286 to 307 (FEPAPRRGAEGEVNRRTPDYFL) is disordered. Positions 289-307 (APRRGAEGEVNRRTPDYFL) are enriched in basic and acidic residues.

This sequence belongs to the PPP phosphatase family. PP-2A subfamily. It depends on Mn(2+) as a cofactor.

It catalyses the reaction O-phospho-L-seryl-[protein] + H2O = L-seryl-[protein] + phosphate. The catalysed reaction is O-phospho-L-threonyl-[protein] + H2O = L-threonyl-[protein] + phosphate. This is Serine/threonine-protein phosphatase PP2A-1 catalytic subunit from Acetabularia peniculus (Green alga).